The chain runs to 57 residues: UPF0391 membrane protein HNE_2348 (57 aa).

The next 2 membrane-spanning stretches (helical) occupy residues 4–24 (WALT…GGIA) and 27–47 (AASI…ITFV).

Belongs to the UPF0391 family.

The protein localises to the cell membrane. This Hyphomonas neptunium (strain ATCC 15444) protein is UPF0391 membrane protein HNE_2348.